Consider the following 364-residue polypeptide: MSRNLIYRRNRALCFVLILFCFPYRFGARNTPEAEQSTAKATQIIHVSNSTWHDFSRLVDVQIGSHVSGVSELKRYLHRFGYVNDGSEIFSDVFDGPLESAISLYQENLGLPITGRLDTSTVTLMSLPRCGVSDTHMTINNDFLHTTAHYTYFNGKPKWNRDTLTYAISKTHKLDYLTSEDVKTVFRRAFSQWSSVIPVSFEEVDDFTTADLKIGFYAGDHGDGLPFDGVLGTLAHAFAPENGRLHLDAAETWIVDDDLKGSSEVAVDLESVATHEIGHLLGLGHSSQESAVMYPSLRPRTKKVDLTVDDVAGVLKLYGPNPKLRLDSLTQSEDSIKNGTVSHRFLSGNFIGYVLLVVGLILFL.

Residues 1-28 form the signal peptide; that stretch reads MSRNLIYRRNRALCFVLILFCFPYRFGA. A propeptide spans 29–149 (activation peptide); sequence RNTPEAEQST…NNDFLHTTAH (121 aa). Asparagine 49 carries an N-linked (GlcNAc...) asparagine glycan. The Cysteine switch signature appears at 128 to 135; sequence PRCGVSDT. Cysteine 130 serves as a coordination point for Zn(2+). Ca(2+) is bound at residue aspartate 211. Zn(2+)-binding residues include histidine 221 and aspartate 223. 2 residues coordinate Ca(2+): aspartate 228 and glycine 229. Histidine 236 is a Zn(2+) binding site. Glycine 243 provides a ligand contact to Ca(2+). Histidine 246 is a Zn(2+) binding site. Positions 248 and 251 each coordinate Ca(2+). Histidine 275 contacts Zn(2+). The active site involves glutamate 276. Positions 279 and 285 each coordinate Zn(2+). Residue asparagine 338 is glycosylated (N-linked (GlcNAc...) asparagine). The GPI-anchor amidated glycine moiety is linked to residue glycine 339. Residues 340 to 364 constitute a propeptide, removed in mature form; sequence TVSHRFLSGNFIGYVLLVVGLILFL.

The protein belongs to the peptidase M10A family. Matrix metalloproteinases (MMPs) subfamily. It depends on Ca(2+) as a cofactor. Zn(2+) is required as a cofactor. In terms of tissue distribution, mostly expressed in flowers, roots and stems, and, to a lower extent, in leaves.

It is found in the cell membrane. Inhibited by human TIMP-1 and TIMP-2 and by the peptide hydroxamate inhibitor (BB-94). Repressed by acetohydroxamic acid (AHA). In terms of biological role, matrix metalloproteinases (MMPs) or matrixins may play a role in the degradation and remodeling of the extracellular matrix (ECM) during development or in response to stresses. Can cleave myelin basic protein as well as fluorigenic peptide substrates, McaPLANvaDpaAR-NH(2) and McaPChaGNvaHADpa-NH(2) 4-fold more efficiently than McaPLGLDpaAR-NH(2) (QF24). Active on myelin basic protein (MBP) and, to some extent, on McaPLGLDpaAR-NH(2) (QF24) and beta-casein. The polypeptide is Metalloendoproteinase 1-MMP (Arabidopsis thaliana (Mouse-ear cress)).